The sequence spans 339 residues: Anthranilate phosphoribosyltransferase (339 aa).

5-phospho-alpha-D-ribose 1-diphosphate is bound by residues Gly-80, 83–84 (GD), Thr-88, 90–93 (NIST), 108–116 (KHGNRAMSS), and Ser-120. Gly-80 is a binding site for anthranilate. Ser-92 is a binding site for Mg(2+). Asn-111 serves as a coordination point for anthranilate. Position 166 (Arg-166) interacts with anthranilate. Positions 225 and 226 each coordinate Mg(2+).

It belongs to the anthranilate phosphoribosyltransferase family. As to quaternary structure, homodimer. It depends on Mg(2+) as a cofactor.

The enzyme catalyses N-(5-phospho-beta-D-ribosyl)anthranilate + diphosphate = 5-phospho-alpha-D-ribose 1-diphosphate + anthranilate. Its pathway is amino-acid biosynthesis; L-tryptophan biosynthesis; L-tryptophan from chorismate: step 2/5. Its function is as follows. Catalyzes the transfer of the phosphoribosyl group of 5-phosphorylribose-1-pyrophosphate (PRPP) to anthranilate to yield N-(5'-phosphoribosyl)-anthranilate (PRA). The sequence is that of Anthranilate phosphoribosyltransferase from Chloroflexus aurantiacus (strain ATCC 29366 / DSM 635 / J-10-fl).